Reading from the N-terminus, the 153-residue chain is UPF0178 protein Atu1478 (153 aa).

Belongs to the UPF0178 family.

The sequence is that of UPF0178 protein Atu1478 from Agrobacterium fabrum (strain C58 / ATCC 33970) (Agrobacterium tumefaciens (strain C58)).